We begin with the raw amino-acid sequence, 398 residues long: Streptopain (398 aa).

Positions 1 to 27 (MNKKKLGVRLLSLLALGGFVLANPVFA) are cleaved as a signal peptide. Positions 28–145 (DQNFARNEKE…TTYAGTAEIK (118 aa)) are excised as a propeptide. C192 acts as the Nucleophile in catalysis. C192 carries the cysteine methyl disulfide; in zymogen form modification. The a protein site is built by S282 and G339. H340 functions as the Proton acceptor in the catalytic mechanism. The segment at 368–390 (RLDALNPSALGTGGGAGGFNGYQ) is C-terminal active site loop.

This sequence belongs to the peptidase C10 family. As to quaternary structure, monomer. In terms of processing, the mature protease is derived from the precursor sequence by cleavage, either in cis via an autocatalytic mechanism, or in trans by mature SpeB or host proteases (trypsin, plasmin or subtilisin). Maturation can involve a number of protein cleavage intermediates. Mature SpeB probably plays the most important role in protein maturation in physiological conditions. Post-translationally, methylthiolation at Cys-192 of the inactive zymogen form is probably involved in the mechanism of secretion of the proteinase into the culture fluid.

It is found in the secreted. The protein resides in the host extracellular space. Its subcellular location is the host cytoplasm. The catalysed reaction is Preferential cleavage with hydrophobic residues at P2, P1 and P1'.. With respect to regulation, synthesized as an inactive zymogen to protect the intracellular components of the bacteria from proteolytic activity during protein production. Once secreted into the extracellular milieu, cleaved into the active protease: maturation can be mediated in cis by autocatalytic cleavage, or in trans by mature SpeB or host proteases. Protease activity is strongly inhibited by zinc and copper, which prevent its maturation into an active protease: inhibition by metal ions may be required to prevent proteolysis of streptococcal proteins. In terms of biological role, cysteine protease that acts as a key streptococcal virulence factor by cleaving host proteins involved in immune response. Triggers inflammation by mediating cleavage of host proteins, which can both promote host pathogenesis by triggering sterile inflammation and/or restrict streptococcal infection, depending on host immune statue and infection site. Cleaves host gasdermin-A (GSDMA) in epithelial cells, promoting GSDMA activation and formation of gasdermin pores, triggering pyroptosis. Pyroptosis triggers the elimination of the infected skin cell, depriving the pathogen of its protective niche, while inducing an inflammatory response. This ultimately prevents bacterial penetration of the epithelial barrier and a subsequent systemic dissemination of the pathogen. Also mediates cleavage of the cytokine precursor interleukin-1 beta (IL1B) to its mature form, resulting in inflammation and septic shock. SpeB-mediated maturation of IL1B plays a dual role depending on infection site: while IL1B inflammatory response prevents bacterial growth during invasive skin infections, it promotes streptococcal infection of the nasopharynx by disrupting colonization resistance mediated by the microbiota. Inhibits host autophagy be catalyzing cleavage and inactivation of key autophagy factors, such as CALCOCO2, NBR1 and SQSTM1. Cleaves and inhibits a number of complement factors, such as C2, C3-beta chain of C3, C4, C5 or SERPING1, thereby promoting evasion of host immunity. May also impair adaptive immunity by catalyzing cleavage and degradation of host immunoglobulins to promote immune system evasion; the relevance of this activity is however unsure in vivo. Catalyzes maturation and release of the peptide hormone bradykinin from the precursor Kininogen-1 (KNG1) to produce hypotension during septic shock. Also involved in bacterial translocation across the host epithelial barrier by mediating cleavage and degradation of host epithelial junction proteins, such as CDH1 and OCLN. Additionally, has been involved in degradation of fibronectin and vitronectin, two host extracellular matrix proteins involved in tissue integrity. Also able to catalyze cleavage and degradation of streptococcal proteins, such as C5a peptidase, EndoS or SmeZ. Degradation of streptococcal proteins is however strictly regulated to preserve integrity of other virulence factors. This Streptococcus pyogenes serotype M1 protein is Streptopain.